The following is a 547-amino-acid chain: Riboflavin transporter RibJ (547 aa).

Residues 1 to 11 (MLPSFTRKPAD) are Cytoplasmic-facing. A helical transmembrane segment spans residues 12 to 32 (HPIGYLVALSGLLMQLMSYGI). Topologically, residues 33-58 (DNSYSIFSEDMHNDPSLGFPSITAIS) are extracellular. The helical transmembrane segment at 59–79 (LGNSVSLGLSPAFGVLAGFCV) threads the bilayer. The Cytoplasmic segment spans residues 80-85 (DRLPPR). Residues 86 to 106 (FMMALSTILLFTGLWISSTLA) traverse the membrane as a helical segment. Topologically, residues 107 to 108 (AN) are extracellular. A helical transmembrane segment spans residues 109–129 (IYVVTFTYCLFASIGTACMLS). At 130–144 (PGAAATSSWFNRYQG) the chain is on the cytoplasmic side. A helical transmembrane segment spans residues 145-165 (LAMGINFAGGGIGSAIIPPLA). At 166-175 (GKWVVAYGWR) the chain is on the extracellular side. A helical membrane pass occupies residues 176–196 (KAFQLMSIFCAIGVLATALSA). Residues 197 to 344 (RRREPKRDDS…MFTLPFMGNF (148 aa)) are Cytoplasmic-facing. A disordered region spans residues 198–293 (RREPKRDDSS…EGLDVTEQSQ (96 aa)). Over residues 244 to 255 (NEGKEDVREMGR) the composition is skewed to basic and acidic residues. A helical transmembrane segment spans residues 345–365 (LCWFIYSWAFYSLIYAAVPYI). Residues 366-386 (SSMGKPGTVYAGVPPIPTDVA) are Extracellular-facing. Residues 387-407 (ATLFTFYGVFQVVGSVLVGWL) form a helical membrane-spanning segment. Residues 408-412 (ASLVT) are Cytoplasmic-facing. A helical transmembrane segment spans residues 413-433 (AEFAYVFCATVGGIGCGLLAL). Residues 434-437 (GRSY) are Extracellular-facing. A helical membrane pass occupies residues 438–458 (VAFALLLCIIGFCMAGMFAVM). The Cytoplasmic segment spans residues 459-470 (PTLIATHLYGPN). The helical transmembrane segment at 471–491 (LGFYFGAVFLAGVVGGFVAPP) threads the bilayer. The Extracellular segment spans residues 492–505 (MQATIQLRNNGSYA). The N-linked (GlcNAc...) asparagine glycan is linked to Asn501. A helical membrane pass occupies residues 506–526 (FVCVVMSVSMTLSALVCYATL). The Cytoplasmic portion of the chain corresponds to 527–547 (WRSKRSGIVLAARKTKLVEIM).

Belongs to the major facilitator superfamily. RibJ family.

It localises to the cell membrane. Its function is as follows. Transporter involved in riboflavin (vitamin B2) uptake. Also transports FMN and FAD. The protein is Riboflavin transporter RibJ of Trypanosoma brucei brucei (strain 927/4 GUTat10.1).